The chain runs to 341 residues: DNA repair protein XRCC3 (341 aa).

Position 1 is an N-acetylmethionine (M1). 107–114 is a binding site for ATP; the sequence is GRSSAGKT.

The protein belongs to the RecA family. RAD51 subfamily. In terms of assembly, interacts with RAD51C and RAD51. Part of the CX3 complex consisting of RAD51C and XRCC3; the complex has a ring-like structure arranged into a flat disc around a central channel; CX3 can interact with RAD51 in vitro. Forms a complex with FANCD2, BRCA2 and phosphorylated FANCG. Interacts with SWSAP1 and ZSWIM7; involved in homologous recombination repair. Interacts directly with PALB2 which may serve as a scaffold for a HR complex containing PALB2, BRCA2, RAD51C, RAD51 and XRCC3.

The protein resides in the nucleus. It localises to the cytoplasm. The protein localises to the perinuclear region. Its subcellular location is the mitochondrion matrix. Involved in the homologous recombination repair (HRR) pathway of double-stranded DNA, thought to repair chromosomal fragmentation, translocations and deletions. Part of the RAD21 paralog protein complex CX3 which acts in the BRCA1-BRCA2-dependent HR pathway. Upon DNA damage, CX3 acts downstream of RAD51 recruitment; the complex binds predominantly to the intersection of the four duplex arms of the Holliday junction (HJ) and to junctions of replication forks. Involved in HJ resolution and thus in processing HR intermediates late in the DNA repair process; the function may be linked to the CX3 complex and seems to involve GEN1 during mitotic cell cycle progression. Part of a PALB2-scaffolded HR complex containing BRCA2 and RAD51C and which is thought to play a role in DNA repair by HR. Plays a role in regulating mitochondrial DNA copy number under conditions of oxidative stress in the presence of RAD51 and RAD51C. In Bos taurus (Bovine), this protein is DNA repair protein XRCC3 (XRCC3).